The following is a 178-amino-acid chain: Ribosome maturation factor RimP (178 aa).

Belongs to the RimP family.

It localises to the cytoplasm. Required for maturation of 30S ribosomal subunits. This is Ribosome maturation factor RimP from Streptococcus pyogenes serotype M1.